The sequence spans 47 residues: Antimicrobial peptide LCI (47 aa).

The protein localises to the secreted. Its function is as follows. Has antibacterial activity against X.oryzae pv oryzae and R.solanacearum, but not E.coli or P.carotovorum subsp carotovorum. May bind DNA or mRNA. In Bacillus subtilis, this protein is Antimicrobial peptide LCI.